A 171-amino-acid polypeptide reads, in one-letter code: Endoribonuclease YbeY (171 aa).

Positions 130, 134, and 140 each coordinate Zn(2+).

The protein belongs to the endoribonuclease YbeY family. The cofactor is Zn(2+).

It localises to the cytoplasm. In terms of biological role, single strand-specific metallo-endoribonuclease involved in late-stage 70S ribosome quality control and in maturation of the 3' terminus of the 16S rRNA. This chain is Endoribonuclease YbeY, found in Neisseria meningitidis serogroup C / serotype 2a (strain ATCC 700532 / DSM 15464 / FAM18).